The chain runs to 185 residues: Capsid protein (185 aa).

Positions 136-185 (NAPILSTLPETTVVRRRDRGRSPRRRTPSPRRRRSQSPRRRRSQSRESQC) are disordered. Over residues 149-178 (VRRRDRGRSPRRRTPSPRRRRSQSPRRRRS) the composition is skewed to basic residues. Ser157, Ser164, and Ser172 each carry phosphoserine; by host. A 1; half-length repeat occupies 157–163 (SPRRRTP). Positions 157–179 (SPRRRTPSPRRRRSQSPRRRRSQ) are 3 X 8 AA repeats of S-P-R-R-R-[PR]-S-Q. Residues 160–177 (RRTPSPRRRRSQSPRRRR) carry the Bipartite nuclear localization signal motif. Tandem repeats lie at residues 164-171 (SPRRRRSQ) and 172-179 (SPRRRRSQ). Positions 179–185 (QSRESQC) are RNA binding.

It belongs to the orthohepadnavirus core antigen family. Homodimerizes, then multimerizes. Interacts with cytosol exposed regions of viral L glycoprotein present in the reticulum-to-Golgi compartment. Interacts with human FLNB. Phosphorylated form interacts with host importin alpha; this interaction depends on the exposure of the NLS, which itself depends upon genome maturation and/or phosphorylation of the capsid protein. Interacts with host NUP153. Post-translationally, phosphorylated by host SRPK1, SRPK2, and maybe protein kinase C or GAPDH. Phosphorylation is critical for pregenomic RNA packaging. Protein kinase C phosphorylation is stimulated by HBx protein and may play a role in transport of the viral genome to the nucleus at the late step during the viral replication cycle.

The protein localises to the virion. Its subcellular location is the host cytoplasm. Its function is as follows. Self assembles to form an icosahedral capsid. Most capsids appear to be large particles with an icosahedral symmetry of T=4 and consist of 240 copies of capsid protein, though a fraction forms smaller T=3 particles consisting of 180 capsid proteins. Entering capsids are transported along microtubules to the nucleus. Phosphorylation of the capsid is thought to induce exposure of nuclear localization signal in the C-terminal portion of the capsid protein that allows binding to the nuclear pore complex via the importin (karyopherin-) alpha and beta. Capsids are imported in intact form through the nuclear pore into the nuclear basket, where it probably binds NUP153. Only capsids that contain the mature viral genome can release the viral DNA and capsid protein into the nucleoplasm. Immature capsids get stuck in the basket. Capsids encapsulate the pre-genomic RNA and the P protein. Pre-genomic RNA is reverse-transcribed into DNA while the capsid is still in the cytoplasm. The capsid can then either be directed to the nucleus, providing more genomes for transcription, or bud through the endoplasmic reticulum to provide new virions. In Homo sapiens (Human), this protein is Capsid protein.